The chain runs to 397 residues: Ribosomal RNA large subunit methyltransferase I (397 aa).

In terms of domain architecture, PUA spans 2-80 (AIRIKLKPGR…KEETIDADFF (79 aa)).

It belongs to the methyltransferase superfamily. RlmI family.

The protein localises to the cytoplasm. It carries out the reaction cytidine(1962) in 23S rRNA + S-adenosyl-L-methionine = 5-methylcytidine(1962) in 23S rRNA + S-adenosyl-L-homocysteine + H(+). Functionally, specifically methylates the cytosine at position 1962 (m5C1962) of 23S rRNA. The protein is Ribosomal RNA large subunit methyltransferase I of Shewanella frigidimarina (strain NCIMB 400).